A 254-amino-acid chain; its full sequence is Pyruvate dehydrogenase complex repressor (254 aa).

The 69-residue stretch at Pro9 to Ser77 folds into the HTH gntR-type domain. The segment at residues Glu37 to Gln56 is a DNA-binding region (H-T-H motif).

Transcriptional repressor for the pyruvate dehydrogenase complex genes aceEF and lpd. In Salmonella typhi, this protein is Pyruvate dehydrogenase complex repressor (pdhR).